The following is a 163-amino-acid chain: Ribonuclease H (163 aa).

The 143-residue stretch at 4–146 (SPKKVLIYTD…CDRLAVRASQ (143 aa)) folds into the RNase H type-1 domain. Residues D13, E51, D73, and D138 each contribute to the Mg(2+) site.

It belongs to the RNase H family. As to quaternary structure, monomer. It depends on Mg(2+) as a cofactor.

It is found in the cytoplasm. The enzyme catalyses Endonucleolytic cleavage to 5'-phosphomonoester.. In terms of biological role, endonuclease that specifically degrades the RNA of RNA-DNA hybrids. This chain is Ribonuclease H, found in Rippkaea orientalis (strain PCC 8801 / RF-1) (Cyanothece sp. (strain PCC 8801)).